A 340-amino-acid polypeptide reads, in one-letter code: Ketol-acid reductoisomerase (NADP(+)) (340 aa).

In terms of domain architecture, KARI N-terminal Rossmann spans Leu-3–Thr-183. NADP(+) is bound by residues Phe-26–Gln-29, Ser-54, and Asp-84–Gln-87. His-109 is an active-site residue. Gly-135 contacts NADP(+). The KARI C-terminal knotted domain maps to Thr-184–Ile-329. Asp-192, Glu-196, Glu-228, and Glu-232 together coordinate Mg(2+). Ser-253 provides a ligand contact to substrate.

It belongs to the ketol-acid reductoisomerase family. The cofactor is Mg(2+).

The catalysed reaction is (2R)-2,3-dihydroxy-3-methylbutanoate + NADP(+) = (2S)-2-acetolactate + NADPH + H(+). It carries out the reaction (2R,3R)-2,3-dihydroxy-3-methylpentanoate + NADP(+) = (S)-2-ethyl-2-hydroxy-3-oxobutanoate + NADPH + H(+). Its pathway is amino-acid biosynthesis; L-isoleucine biosynthesis; L-isoleucine from 2-oxobutanoate: step 2/4. The protein operates within amino-acid biosynthesis; L-valine biosynthesis; L-valine from pyruvate: step 2/4. Functionally, involved in the biosynthesis of branched-chain amino acids (BCAA). Catalyzes an alkyl-migration followed by a ketol-acid reduction of (S)-2-acetolactate (S2AL) to yield (R)-2,3-dihydroxy-isovalerate. In the isomerase reaction, S2AL is rearranged via a Mg-dependent methyl migration to produce 3-hydroxy-3-methyl-2-ketobutyrate (HMKB). In the reductase reaction, this 2-ketoacid undergoes a metal-dependent reduction by NADPH to yield (R)-2,3-dihydroxy-isovalerate. This is Ketol-acid reductoisomerase (NADP(+)) from Nitratiruptor sp. (strain SB155-2).